A 150-amino-acid polypeptide reads, in one-letter code: 6,7-dimethyl-8-ribityllumazine synthase (150 aa).

5-amino-6-(D-ribitylamino)uracil is bound by residues phenylalanine 11, 43 to 45 (VYD), and 67 to 69 (AVI). 72 to 73 (AT) serves as a coordination point for (2S)-2-hydroxy-3-oxobutyl phosphate. Catalysis depends on histidine 75, which acts as the Proton donor. 5-amino-6-(D-ribitylamino)uracil is bound at residue leucine 100. Arginine 115 lines the (2S)-2-hydroxy-3-oxobutyl phosphate pocket.

The protein belongs to the DMRL synthase family.

The enzyme catalyses (2S)-2-hydroxy-3-oxobutyl phosphate + 5-amino-6-(D-ribitylamino)uracil = 6,7-dimethyl-8-(1-D-ribityl)lumazine + phosphate + 2 H2O + H(+). The protein operates within cofactor biosynthesis; riboflavin biosynthesis; riboflavin from 2-hydroxy-3-oxobutyl phosphate and 5-amino-6-(D-ribitylamino)uracil: step 1/2. In terms of biological role, catalyzes the formation of 6,7-dimethyl-8-ribityllumazine by condensation of 5-amino-6-(D-ribitylamino)uracil with 3,4-dihydroxy-2-butanone 4-phosphate. This is the penultimate step in the biosynthesis of riboflavin. The sequence is that of 6,7-dimethyl-8-ribityllumazine synthase from Pyrobaculum arsenaticum (strain DSM 13514 / JCM 11321 / PZ6).